Reading from the N-terminus, the 117-residue chain is UPF0344 protein GTNG_0604 (117 aa).

Helical transmembrane passes span 1–21 (MTHAHITSWFIMIILFLIAVS), 39–59 (LFYIITIITGLLLLHSIASIS), 61–81 (LYWLKALAGLWVIGAMEMVLV), and 97–117 (VIALVVTLFLGLLLPLGFDLF).

Belongs to the UPF0344 family.

It localises to the cell membrane. The protein is UPF0344 protein GTNG_0604 of Geobacillus thermodenitrificans (strain NG80-2).